The chain runs to 81 residues: MASLKVFSFALILVLTFSVDVEGYNVESGGSLCCNNHPKFGKCNTNNDNQRCNRWCHNGCGNGKGDYCKAMSHGGLCHCYC.

Residues 1–23 (MASLKVFSFALILVLTFSVDVEG) form the signal peptide. Disulfide bonds link Cys-33/Cys-81, Cys-43/Cys-68, Cys-52/Cys-77, and Cys-56/Cys-79.

The protein belongs to the DEFL family.

The protein localises to the secreted. In Arabidopsis thaliana (Mouse-ear cress), this protein is Putative defensin-like protein 25.